The chain runs to 592 residues: BTB/POZ domain-containing protein At5g03250 (592 aa).

The BTB domain maps to 28–98; that stretch reads SDVTIEVGDM…CYGVKIELTA (71 aa). In terms of domain architecture, NPH3 spans 217 to 502; that stretch reads DWWFDDASFL…VQVLFFEQLR (286 aa). At Y443 the chain carries Phosphotyrosine.

Belongs to the NPH3 family.

It functions in the pathway protein modification; protein ubiquitination. Its function is as follows. May act as a substrate-specific adapter of an E3 ubiquitin-protein ligase complex (CUL3-RBX1-BTB) which mediates the ubiquitination and subsequent proteasomal degradation of target proteins. This chain is BTB/POZ domain-containing protein At5g03250, found in Arabidopsis thaliana (Mouse-ear cress).